A 329-amino-acid chain; its full sequence is GTPase Obg (329 aa).

Residues Met-1 to Leu-159 enclose the Obg domain. The region spanning Ser-160 to Gln-327 is the OBG-type G domain. Residues Gly-166–Ser-173, Phe-191–Thr-195, Asp-212–Gly-215, Thr-279–Asp-282, and Ser-308–Tyr-310 contribute to the GTP site. Positions 173 and 193 each coordinate Mg(2+).

It belongs to the TRAFAC class OBG-HflX-like GTPase superfamily. OBG GTPase family. Monomer. Requires Mg(2+) as cofactor.

It localises to the cytoplasm. In terms of biological role, an essential GTPase which binds GTP, GDP and possibly (p)ppGpp with moderate affinity, with high nucleotide exchange rates and a fairly low GTP hydrolysis rate. Plays a role in control of the cell cycle, stress response, ribosome biogenesis and in those bacteria that undergo differentiation, in morphogenesis control. The polypeptide is GTPase Obg (Orientia tsutsugamushi (strain Boryong) (Rickettsia tsutsugamushi)).